Consider the following 200-residue polypeptide: Large ribosomal subunit protein bL25 (200 aa).

This sequence belongs to the bacterial ribosomal protein bL25 family. CTC subfamily. As to quaternary structure, part of the 50S ribosomal subunit; part of the 5S rRNA/L5/L18/L25 subcomplex. Contacts the 5S rRNA. Binds to the 5S rRNA independently of L5 and L18.

This is one of the proteins that binds to the 5S RNA in the ribosome where it forms part of the central protuberance. This Caldicellulosiruptor bescii (strain ATCC BAA-1888 / DSM 6725 / KCTC 15123 / Z-1320) (Anaerocellum thermophilum) protein is Large ribosomal subunit protein bL25.